The sequence spans 561 residues: Asparagine synthetase [glutamine-hydrolyzing] (561 aa).

The active-site For GATase activity is the Cys-2. Residues 2–191 (CGIWALFGSD…PGHYEVLDLK (190 aa)) form the Glutamine amidotransferase type-2 domain. L-glutamine-binding positions include 49 to 53 (RLAVV), 75 to 77 (NGE), and Asp-97. The region spanning 213 to 536 (HALYDNVEKL…PGRADWLSHY (324 aa)) is the Asparagine synthetase domain. ATP contacts are provided by residues Leu-256, Ile-288, and 363–364 (SG). Residue Lys-385 is modified to N6-acetyllysine. Thr-545 is subject to Phosphothreonine. Ser-557 carries the phosphoserine modification.

It catalyses the reaction L-aspartate + L-glutamine + ATP + H2O = L-asparagine + L-glutamate + AMP + diphosphate + H(+). It functions in the pathway amino-acid biosynthesis; L-asparagine biosynthesis; L-asparagine from L-aspartate (L-Gln route): step 1/1. The polypeptide is Asparagine synthetase [glutamine-hydrolyzing] (ASNS) (Homo sapiens (Human)).